Reading from the N-terminus, the 370-residue chain is MLDTVRVDLPGRAYDVRIGSGLLPEAGGHVLPLLKRPRVAVVTDETVAGLHLEALRAGLARDGIEMSALALPAGEATKSWAPLERTVGWLLDQKVERGDVVVAFGGGVIGDLVGFAAAILRRGVRFVQIPTSLLAQVDSSVGGKTGINAAQGKNLIGAFHQPSLVLADIDVLGSLTARDFLAGYGEVVKYGLLGDLTFFEWLEQNGPALAAGDKGARCEAVRRSVQMKADIVIRDETEQGDRALLNLGHTFGHALEAATGYSDRLLHGEGVAIGCALAFELSARMGLCSQESPSRVRAHLKAMGMKTDLHDIPGDLPDAACLLDLMGQDKKVTQGKLHFILARGLGEAFVTSDVAASDVLMVLEDALRSK.

NAD(+) is bound by residues 107 to 111 (GVIGD), 131 to 132 (TS), lysine 144, and lysine 153. Positions 186, 249, and 267 each coordinate Zn(2+).

This sequence belongs to the sugar phosphate cyclases superfamily. Dehydroquinate synthase family. It depends on Co(2+) as a cofactor. The cofactor is Zn(2+). NAD(+) is required as a cofactor.

It is found in the cytoplasm. The enzyme catalyses 7-phospho-2-dehydro-3-deoxy-D-arabino-heptonate = 3-dehydroquinate + phosphate. It participates in metabolic intermediate biosynthesis; chorismate biosynthesis; chorismate from D-erythrose 4-phosphate and phosphoenolpyruvate: step 2/7. Functionally, catalyzes the conversion of 3-deoxy-D-arabino-heptulosonate 7-phosphate (DAHP) to dehydroquinate (DHQ). The polypeptide is 3-dehydroquinate synthase (Roseobacter denitrificans (strain ATCC 33942 / OCh 114) (Erythrobacter sp. (strain OCh 114))).